The following is a 314-amino-acid chain: Cytosolic sulfotransferase 3 (314 aa).

71 to 76 (KSGTLW) contacts 3'-phosphoadenylyl sulfate. Residue His121 is the Proton acceptor of the active site. 3'-phosphoadenylyl sulfate is bound by residues Arg143, Ser151, Tyr209, and 275 to 277 (RKG).

The protein belongs to the sulfotransferase 1 family.

The protein localises to the cytoplasm. Sulfotransferase that utilizes 3'-phospho-5'-adenylyl sulfate (PAPS) as sulfonate donor. The polypeptide is Cytosolic sulfotransferase 3 (SOT3) (Arabidopsis thaliana (Mouse-ear cress)).